Reading from the N-terminus, the 252-residue chain is Pyridoxine 5'-phosphate synthase (252 aa).

Residue Asn-12 participates in 3-amino-2-oxopropyl phosphate binding. 14-15 (DH) lines the 1-deoxy-D-xylulose 5-phosphate pocket. Residue Arg-23 coordinates 3-amino-2-oxopropyl phosphate. His-48 acts as the Proton acceptor in catalysis. 2 residues coordinate 1-deoxy-D-xylulose 5-phosphate: Arg-50 and His-55. Glu-75 serves as the catalytic Proton acceptor. Position 105 (Thr-105) interacts with 1-deoxy-D-xylulose 5-phosphate. The Proton donor role is filled by His-199. Residues Gly-200 and 221 to 222 (GH) contribute to the 3-amino-2-oxopropyl phosphate site.

Belongs to the PNP synthase family. Homooctamer; tetramer of dimers.

The protein resides in the cytoplasm. The catalysed reaction is 3-amino-2-oxopropyl phosphate + 1-deoxy-D-xylulose 5-phosphate = pyridoxine 5'-phosphate + phosphate + 2 H2O + H(+). Its pathway is cofactor biosynthesis; pyridoxine 5'-phosphate biosynthesis; pyridoxine 5'-phosphate from D-erythrose 4-phosphate: step 5/5. Its function is as follows. Catalyzes the complicated ring closure reaction between the two acyclic compounds 1-deoxy-D-xylulose-5-phosphate (DXP) and 3-amino-2-oxopropyl phosphate (1-amino-acetone-3-phosphate or AAP) to form pyridoxine 5'-phosphate (PNP) and inorganic phosphate. This Cereibacter sphaeroides (strain ATCC 17029 / ATH 2.4.9) (Rhodobacter sphaeroides) protein is Pyridoxine 5'-phosphate synthase.